The primary structure comprises 63 residues: Adipokinetic prohormone type 1 (63 aa).

Positions 1–22 are cleaved as a signal peptide; it reads MVQRCLVVALLVVVVAAALCSA. Position 23 is a pyrrolidone carboxylic acid (glutamine 23). At threonine 32 the chain carries Threonine amide.

Belongs to the AKH/HRTH/RPCH family. Adipokinetic hormone precursor-related peptide (APRP) can form three type of disulfide-bond dimers: p1 (alpha-alpha), p2 (alpha-beta), and p3 (beta-beta).

The protein resides in the secreted. Functionally, this hormone, released from cells in the corpora cardiaca, causes release of diglycerides from the fat body and stimulation of muscles to use these diglycerides as an energy source during energy-demanding processes. The protein is Adipokinetic prohormone type 1 of Schistocerca nitens (Vagrant locust).